An 877-amino-acid polypeptide reads, in one-letter code: DNA polymerase I (877 aa).

One can recognise a 5'-3' exonuclease domain in the interval 177–270 (TPAQFIDLKA…LEDLVYSGPD (94 aa)). The 164-residue stretch at 302-465 (DFTIVDQISQ…TEPILLEKLS (164 aa)) folds into the 3'-5' exonuclease domain.

Belongs to the DNA polymerase type-A family. Single-chain monomer with multiple functions.

It carries out the reaction DNA(n) + a 2'-deoxyribonucleoside 5'-triphosphate = DNA(n+1) + diphosphate. Functionally, in addition to polymerase activity, this DNA polymerase exhibits 3'-5' and 5'-3' exonuclease activity. The polypeptide is DNA polymerase I (polA) (Streptococcus pneumoniae (strain ATCC BAA-255 / R6)).